The following is a 366-amino-acid chain: DNA double-strand break repair protein Mre11 (366 aa).

Mn(2+) contacts are provided by aspartate 8, histidine 10, aspartate 49, and asparagine 84. Histidine 85 functions as the Proton donor in the catalytic mechanism. Mn(2+) contacts are provided by histidine 158, histidine 186, and histidine 188.

This sequence belongs to the MRE11/RAD32 family. In terms of assembly, homodimer. Forms a heterotetramer composed of two Mre11 subunits and two Rad50 subunits. It depends on Mn(2+) as a cofactor.

Nuclease activity is regulated by Rad50. Part of the Rad50/Mre11 complex, which is involved in the early steps of DNA double-strand break (DSB) repair. The complex may facilitate opening of the processed DNA ends to aid in the recruitment of HerA and NurA. Mre11 binds to DSB ends and has both double-stranded 3'-5' exonuclease activity and single-stranded endonuclease activity. In Methanocaldococcus jannaschii (strain ATCC 43067 / DSM 2661 / JAL-1 / JCM 10045 / NBRC 100440) (Methanococcus jannaschii), this protein is DNA double-strand break repair protein Mre11.